Consider the following 54-residue polypeptide: Ovomucoid (54 aa).

One can recognise a Kazal-like domain in the interval 4 to 54; it reads VDCSDYPKPACTLEYMPLCGSDNKTYGNKCNFCNAVVDSNGTLTLSHFGKC. 3 cysteine pairs are disulfide-bonded: C6-C36, C14-C33, and C22-C54. N43 carries N-linked (GlcNAc...) asparagine glycosylation.

It is found in the secreted. This is Ovomucoid from Dendrocygna arcuata (Wandering whistling-duck).